The chain runs to 347 residues: Photosystem II assembly protein Ycf48 (347 aa).

The signal sequence occupies residues 1 to 38; it reads MFAKQIDIHWQKMKGIKFLHWLLGTVLLWVSLSTPALA. An Arg-rich patch motif is present at residues 202–226; sequence RGSFYSTWEPGQTAWEPHNRTTSRR.

This sequence belongs to the Ycf48 family. In terms of assembly, interacts with the D1 protein (crystallized with PsbA1 or PsbA3), via the latter's C-terminal prepropeptide, may interact with parts of the mature D1 protein as well.

The protein resides in the cellular thylakoid lumen. Functionally, a factor required for optimal assembly of photosystem II (PSII), acting in the early stages of PSII assembly. Also plays a role in replacement of photodamaged D1 (psbA). Assists YidC in synthesis of chlorophyll-binding proteins. In Thermosynechococcus vestitus (strain NIES-2133 / IAM M-273 / BP-1), this protein is Photosystem II assembly protein Ycf48.